The following is a 357-amino-acid chain: Phosphoribosylformylglycinamidine cyclo-ligase (357 aa).

It belongs to the AIR synthase family.

It localises to the cytoplasm. It carries out the reaction 2-formamido-N(1)-(5-O-phospho-beta-D-ribosyl)acetamidine + ATP = 5-amino-1-(5-phospho-beta-D-ribosyl)imidazole + ADP + phosphate + H(+). The protein operates within purine metabolism; IMP biosynthesis via de novo pathway; 5-amino-1-(5-phospho-D-ribosyl)imidazole from N(2)-formyl-N(1)-(5-phospho-D-ribosyl)glycinamide: step 2/2. In Rhizobium johnstonii (strain DSM 114642 / LMG 32736 / 3841) (Rhizobium leguminosarum bv. viciae), this protein is Phosphoribosylformylglycinamidine cyclo-ligase.